Consider the following 69-residue polypeptide: DNA gyrase inhibitor YacG (69 aa).

Zn(2+)-binding residues include Cys7, Cys10, Cys26, and Cys30.

It belongs to the DNA gyrase inhibitor YacG family. As to quaternary structure, interacts with GyrB. Requires Zn(2+) as cofactor.

In terms of biological role, inhibits all the catalytic activities of DNA gyrase by preventing its interaction with DNA. Acts by binding directly to the C-terminal domain of GyrB, which probably disrupts DNA binding by the gyrase. The chain is DNA gyrase inhibitor YacG from Shewanella baltica (strain OS155 / ATCC BAA-1091).